The primary structure comprises 1189 residues: Pesticidal crystal protein Cry1Ca (1189 aa).

It belongs to the delta endotoxin family.

Functionally, promotes colloidosmotic lysis by binding to the midgut epithelial cells of many lepidopteran larvae including Spodoptera species. This Bacillus thuringiensis subsp. entomocidus protein is Pesticidal crystal protein Cry1Ca (cry1Ca).